We begin with the raw amino-acid sequence, 260 residues long: Flap endonuclease Xni (260 aa).

Asp-109 is a Mg(2+) binding site. In terms of domain architecture, 5'-3' exonuclease spans 165–259 (VKPSQLADYW…DIRFTGPNKA (95 aa)). Leu-176, Pro-185, Val-187, and Val-190 together coordinate K(+). Positions 189 to 194 (GVGPKA) are interaction with DNA.

This sequence belongs to the Xni family. It depends on Mg(2+) as a cofactor. The cofactor is K(+).

Its function is as follows. Has flap endonuclease activity. During DNA replication, flap endonucleases cleave the 5'-overhanging flap structure that is generated by displacement synthesis when DNA polymerase encounters the 5'-end of a downstream Okazaki fragment. The chain is Flap endonuclease Xni from Vibrio campbellii (strain ATCC BAA-1116).